Consider the following 226-residue polypeptide: MADGKGPVVALVPAAGQGVRLGENRPKAFVDLGGTTMLTRAVDGLLQSGAVDRVVVIVPEELVESTRTLLPGEVTVVAGGSERTDSVRAGLAVADDADYVLVHDAARALTPPSLIARVVEELRCGRNAVIPVLPVTDTIKTVDVLGAVTGTPERSELRAVQTPQGFTAELLRRAYAAADGIATDDAGLVERLGERVRSIVGEPTAFKITTPLDLVLARALVEEGAH.

Belongs to the IspD/TarI cytidylyltransferase family. IspD subfamily.

It catalyses the reaction 2-C-methyl-D-erythritol 4-phosphate + CTP + H(+) = 4-CDP-2-C-methyl-D-erythritol + diphosphate. It functions in the pathway isoprenoid biosynthesis; isopentenyl diphosphate biosynthesis via DXP pathway; isopentenyl diphosphate from 1-deoxy-D-xylulose 5-phosphate: step 2/6. Functionally, catalyzes the formation of 4-diphosphocytidyl-2-C-methyl-D-erythritol from CTP and 2-C-methyl-D-erythritol 4-phosphate (MEP). The chain is 2-C-methyl-D-erythritol 4-phosphate cytidylyltransferase from Rhodococcus jostii (strain RHA1).